The following is a 563-amino-acid chain: Cytidine monophosphate-N-acetylneuraminic acid hydroxylase (563 aa).

In terms of domain architecture, Rieske spans 10–108; that stretch reads LSPAETANLK…VEMDGNDGLF (99 aa). Residues Cys50, His52, Cys71, and His74 each coordinate [2Fe-2S] cluster.

It belongs to the CMP-Neu5Ac hydroxylase family. The cofactor is [2Fe-2S] cluster.

It localises to the cytoplasm. The catalysed reaction is CMP-N-acetyl-beta-neuraminate + 2 Fe(II)-[cytochrome b5] + O2 + 2 H(+) = CMP-N-glycoloyl-beta-neuraminate + 2 Fe(III)-[cytochrome b5] + H2O. It functions in the pathway amino-sugar metabolism; N-acetylneuraminate metabolism. Functionally, sialic acids are components of carbohydrate chains of glycoconjugates and are involved in cell-cell recognition and cell-pathogen interactions. Catalyzes the conversion of CMP-N-acetylneuraminic acid (CMP-Neu5Ac) into its hydroxylated derivative CMP-N-glycolylneuraminic acid (CMP-Neu5Gc), a sialic acid abundantly expressed at the surface of many cells. This chain is Cytidine monophosphate-N-acetylneuraminic acid hydroxylase (CMAH), found in Cricetulus griseus (Chinese hamster).